The sequence spans 229 residues: Protein ras-2 (229 aa).

15–22 (GDGGVGKT) is a binding site for GTP. The Effector region motif lies at 37 to 45 (YDPTIEDSY). 62–66 (DTAGQ) is a GTP binding site. The interval 109–132 (KESTSSPSAYPGSSPLAATNPSAP) is disordered. Positions 111-126 (STSSPSAYPGSSPLAA) are enriched in low complexity. Position 140 to 143 (140 to 143 (NKSD)) interacts with GTP. The interval 188–229 (LRKQRQQGQSTPRALPPSGNSKSEKYSGTEKPKRPRGKCLII) is disordered. Residues 209–219 (KSEKYSGTEKP) are compositionally biased toward basic and acidic residues. Over residues 220–229 (KRPRGKCLII) the composition is skewed to basic residues. C226 is subject to Cysteine methyl ester. A lipid anchor (S-farnesyl cysteine) is attached at C226. A propeptide spans 227–229 (LII) (removed in mature form).

The protein belongs to the small GTPase superfamily. Ras family.

The protein resides in the cell membrane. The enzyme catalyses GTP + H2O = GDP + phosphate + H(+). Its function is as follows. Ras proteins bind GDP/GTP and possess intrinsic GTPase activity. The polypeptide is Protein ras-2 (ras-2) (Neurospora crassa (strain ATCC 24698 / 74-OR23-1A / CBS 708.71 / DSM 1257 / FGSC 987)).